A 586-amino-acid polypeptide reads, in one-letter code: Acetylcholinesterase (586 aa).

The N-terminal stretch at 1-21 is a signal peptide; the sequence is MNLLVTSSLGVLLHLVVLCQA. An N-linked (GlcNAc...) asparagine glycan is attached at Asn-80. An intrachain disulfide couples Cys-88 to Cys-115. The Acyl-ester intermediate role is filled by Ser-221. A disulfide bridge connects residues Cys-275 and Cys-286. The active-site Charge relay system is Glu-348. Cys-423 and Cys-542 are joined by a disulfide. N-linked (GlcNAc...) asparagine glycosylation is present at Asn-437. His-461 serves as the catalytic Charge relay system. Asn-478 and Asn-554 each carry an N-linked (GlcNAc...) asparagine glycan. Residue Ser-564 is the site of GPI-anchor amidated serine attachment. Positions 565 to 586 are cleaved as a propeptide — removed in mature form; the sequence is SGTSSSKGIIFYVLFSILYLIF.

The protein belongs to the type-B carboxylesterase/lipase family. Isoform H form is a homodimer; the asymmetric form is a disulfide-bonded oligomer composed of a collagenic subunit (Q) and a variable number of T catalytic subunits. In terms of processing, an interchain disulfide bond is present in what becomes position 593 of the T isoform. Found in the synapses and to a lower extent in extrajunctional areas of muscle and nerve, and on erythrocyte membranes.

The protein localises to the cell membrane. It is found in the synapse. The catalysed reaction is acetylcholine + H2O = choline + acetate + H(+). With respect to regulation, inhibited by substrate concentrations above 0.5 mM. Functionally, terminates signal transduction at the neuromuscular junction by rapid hydrolysis of the acetylcholine released into the synaptic cleft. May be involved in cell-cell interactions. This is Acetylcholinesterase (ache) from Tetronarce californica (Pacific electric ray).